An 84-amino-acid polypeptide reads, in one-letter code: MKRFLLFISILMMIGTIVVGKEGYAMDHEGCKFSCFIRPSGFCDGYCKTHLKASSGYCAWPACYCYGVPSNIKVWDYATNKCGK.

The signal sequence occupies residues 1 to 20 (MKRFLLFISILMMIGTIVVG). Positions 21-83 (KEGYAMDHEG…VWDYATNKCG (63 aa)) constitute an LCN-type CS-alpha/beta domain. Intrachain disulfides connect Cys-31-Cys-82, Cys-35-Cys-58, Cys-43-Cys-63, and Cys-47-Cys-65. At Cys-82 the chain carries Cysteine amide.

It belongs to the long (4 C-C) scorpion toxin superfamily. Sodium channel inhibitor family. Beta subfamily. Contains 4 disulfide bonds. In terms of tissue distribution, expressed by the venom gland.

It is found in the secreted. In terms of biological role, beta toxins bind voltage-independently at site-4 of sodium channels (Nav) and shift the voltage of activation toward more negative potentials thereby affecting sodium channel activation and promoting spontaneous and repetitive firing. This toxin is active against hNav1.3/SCN3A. The sequence is that of Toxin Tf2 from Tityus fasciolatus (Central Brazilian scorpion).